Consider the following 262-residue polypeptide: UPF0758 protein BTH_I0781 (262 aa).

The interval 1–45 is disordered; sequence MQYEIVSAGENVGDEPERERPVAQAAAAPGIPRPAALPAAGAARR. The span at 22-43 shows a compositional bias: low complexity; it reads VAQAAAAPGIPRPAALPAAGAA. The MPN domain maps to 140–262; that stretch reads LVDSPGAVDD…TFSFAQAGWI (123 aa). Residues histidine 211, histidine 213, and aspartate 224 each coordinate Zn(2+). The short motif at 211–224 is the JAMM motif element; that stretch reads HNHPSGAVRPSAAD.

The protein belongs to the UPF0758 family.

The chain is UPF0758 protein BTH_I0781 from Burkholderia thailandensis (strain ATCC 700388 / DSM 13276 / CCUG 48851 / CIP 106301 / E264).